A 971-amino-acid chain; its full sequence is Isoleucine--tRNA ligase (971 aa).

The 'HIGH' region signature appears at 64–74 (PYANGHIHIGH). Glu602 is an L-isoleucyl-5'-AMP binding site. Residues 643 to 647 (KMSKS) carry the 'KMSKS' region motif. ATP is bound at residue Lys646.

The protein belongs to the class-I aminoacyl-tRNA synthetase family. IleS type 1 subfamily. In terms of assembly, monomer.

It is found in the cytoplasm. It catalyses the reaction tRNA(Ile) + L-isoleucine + ATP = L-isoleucyl-tRNA(Ile) + AMP + diphosphate. Catalyzes the attachment of isoleucine to tRNA(Ile). As IleRS can inadvertently accommodate and process structurally similar amino acids such as valine, to avoid such errors it has two additional distinct tRNA(Ile)-dependent editing activities. One activity is designated as 'pretransfer' editing and involves the hydrolysis of activated Val-AMP. The other activity is designated 'posttransfer' editing and involves deacylation of mischarged Val-tRNA(Ile). This is Isoleucine--tRNA ligase from Bartonella quintana (strain Toulouse) (Rochalimaea quintana).